A 438-amino-acid chain; its full sequence is sn-glycerol-3-phosphate-binding periplasmic protein UgpB (438 aa).

Positions 1–23 are cleaved as a signal peptide; it reads MISLRHTALGLALSLAFTGQALA. Sn-glycerol 3-phosphate-binding residues include Y65, E89, S144, S270, G307, Y346, and R397.

It belongs to the bacterial solute-binding protein 1 family. The complex is composed of two ATP-binding proteins (UgpC), two transmembrane proteins (UgpA and UgpE) and a solute-binding protein (UgpB).

The protein resides in the periplasm. Part of the ABC transporter complex UgpBAEC involved in sn-glycerol-3-phosphate (G3P) import. Binds G3P. In Salmonella paratyphi A (strain ATCC 9150 / SARB42), this protein is sn-glycerol-3-phosphate-binding periplasmic protein UgpB (ugpB).